The chain runs to 313 residues: DNA-directed RNA polymerase subunit alpha (313 aa).

Residues 1 to 227 (MMLDVAPPRF…DFFGLFAEGY (227 aa)) are alpha N-terminal domain (alpha-NTD). Residues 242 to 313 (RPVITDERPI…YGYTLESGRE (72 aa)) form an alpha C-terminal domain (alpha-CTD) region.

This sequence belongs to the RNA polymerase alpha chain family. As to quaternary structure, homodimer. The RNAP catalytic core consists of 2 alpha, 1 beta, 1 beta' and 1 omega subunit. When a sigma factor is associated with the core the holoenzyme is formed, which can initiate transcription.

It carries out the reaction RNA(n) + a ribonucleoside 5'-triphosphate = RNA(n+1) + diphosphate. DNA-dependent RNA polymerase catalyzes the transcription of DNA into RNA using the four ribonucleoside triphosphates as substrates. This Rubrobacter xylanophilus (strain DSM 9941 / JCM 11954 / NBRC 16129 / PRD-1) protein is DNA-directed RNA polymerase subunit alpha.